The chain runs to 393 residues: S-adenosylmethionine synthase 2 (393 aa).

Glutamate 9 contributes to the Mg(2+) binding site. Histidine 15 lines the ATP pocket. A K(+)-binding site is contributed by glutamate 43. L-methionine contacts are provided by glutamate 56 and glutamine 99. ATP is bound by residues 167 to 169 (DGK), 235 to 238 (SGRF), aspartate 246, 252 to 253 (RK), alanine 269, lysine 273, and lysine 277. Residue aspartate 246 coordinates L-methionine. Position 277 (lysine 277) interacts with L-methionine.

Belongs to the AdoMet synthase family. Homotetramer. Mn(2+) is required as a cofactor. It depends on Mg(2+) as a cofactor. Co(2+) serves as cofactor. The cofactor is K(+). Requires NH4(+) as cofactor. Mostly expressed in roots, and, to a lower extent, in hypocotyls and cotyledons.

It localises to the cytoplasm. The enzyme catalyses L-methionine + ATP + H2O = S-adenosyl-L-methionine + phosphate + diphosphate. Its pathway is amino-acid biosynthesis; S-adenosyl-L-methionine biosynthesis; S-adenosyl-L-methionine from L-methionine: step 1/1. Inhibited by products of SAMS reaction (SAM, Pi, PPi), substrate analogs (cycloleucine and ethionine), and alternative nucleotides (GTP, CTP and ADP). Strongly repressed by PPPi. Catalyzes the formation of S-adenosylmethionine from methionine and ATP. The reaction comprises two steps that are both catalyzed by the same enzyme: formation of S-adenosylmethionine (AdoMet) and triphosphate, and subsequent hydrolysis of the triphosphate. In Catharanthus roseus (Madagascar periwinkle), this protein is S-adenosylmethionine synthase 2 (SAMS2).